Here is a 185-residue protein sequence, read N- to C-terminus: GTP cyclohydrolase 1 (185 aa).

Zn(2+) contacts are provided by C75, H78, and C146.

It belongs to the GTP cyclohydrolase I family. As to quaternary structure, homomer.

The enzyme catalyses GTP + H2O = 7,8-dihydroneopterin 3'-triphosphate + formate + H(+). It functions in the pathway cofactor biosynthesis; 7,8-dihydroneopterin triphosphate biosynthesis; 7,8-dihydroneopterin triphosphate from GTP: step 1/1. The sequence is that of GTP cyclohydrolase 1 from Clostridium kluyveri (strain NBRC 12016).